The sequence spans 887 residues: Inter-alpha-trypsin inhibitor heavy chain H3 (887 aa).

The N-terminal stretch at 1-21 (MVTLWWPCLVLALLSGLETSG) is a signal peptide. Positions 22–33 (FPRSPLRLLGKR) are excised as a propeptide. Positions 29–158 (LLGKRSLPEG…KVIFELTYEE (130 aa)) constitute a VIT domain. Residue Asn91 is glycosylated (N-linked (GlcNAc...) asparagine). The VWFA domain occupies 282 to 442 (PKNIAFVIDV…YNFLESLALE (161 aa)). Asn580 carries an N-linked (GlcNAc...) asparagine glycan. The residue at position 647 (Asp647) is an Aspartate 1-(chondroitin 4-sulfate)-ester. Positions 648–887 (PHFIIQVPGK…HTDYIVPSLF (240 aa)) are excised as a propeptide.

Belongs to the ITIH family. In terms of assembly, I-alpha-I plasma protease inhibitors are assembled from one or two heavy chains (HC) and one light chain, bikunin. Pre-alpha-inhibitor (P-alpha-I) is composed of ITIH3/HC3 and bikunin. Post-translationally, heavy chains are linked to bikunin via chondroitin 4-sulfate esterified to the alpha-carboxyl of the C-terminal aspartate after propeptide cleavage.

Its subcellular location is the secreted. May act as a carrier of hyaluronan in serum or as a binding protein between hyaluronan and other matrix protein, including those on cell surfaces in tissues to regulate the localization, synthesis and degradation of hyaluronan which are essential to cells undergoing biological processes. The protein is Inter-alpha-trypsin inhibitor heavy chain H3 (Itih3) of Rattus norvegicus (Rat).